The primary structure comprises 369 residues: S-adenosylmethionine:tRNA ribosyltransferase-isomerase (369 aa).

It belongs to the QueA family. As to quaternary structure, monomer.

It localises to the cytoplasm. It catalyses the reaction 7-aminomethyl-7-carbaguanosine(34) in tRNA + S-adenosyl-L-methionine = epoxyqueuosine(34) in tRNA + adenine + L-methionine + 2 H(+). It functions in the pathway tRNA modification; tRNA-queuosine biosynthesis. Transfers and isomerizes the ribose moiety from AdoMet to the 7-aminomethyl group of 7-deazaguanine (preQ1-tRNA) to give epoxyqueuosine (oQ-tRNA). This Synechococcus sp. (strain CC9311) protein is S-adenosylmethionine:tRNA ribosyltransferase-isomerase.